The chain runs to 942 residues: Nuclear receptor coactivator 7 (942 aa).

At M1 the chain carries N-acetylmethionine. Positions 1–12 (MDTKEEKKERKQ) are enriched in basic and acidic residues. Residues 1–46 (MDTKEEKKERKQSYFARLKKKKQAKQNAETASAVATRTHTGKEDNN) are disordered. Positions 4-29 (KEEKKERKQSYFARLKKKKQAKQNAE) form a coiled coil. The span at 25 to 38 (KQNAETASAVATRT) shows a compositional bias: polar residues. S89 carries the phosphoserine modification. Positions 114-157 (MEYTAGNQDTLNSIALKFNITPNKLVELNKLFTHTIVPGQVLFV) constitute a LysM domain. T134 is subject to Phosphothreonine. Residues 161 to 188 (NSPSSTLRLSSSSPGATVSPSSSDAEYD) are disordered. Low complexity predominate over residues 162 to 183 (SPSSTLRLSSSSPGATVSPSSS). Phosphoserine is present on residues S179, S183, S208, S209, and S211. Residues 324–416 (KFKSINKEKR…ENFLGEDDDF (93 aa)) form a disordered region. Polar residues predominate over residues 356–368 (GHTPTKPSGSSVS). Residues 369–381 (EKLKKLDSSRETS) show a composition bias toward basic and acidic residues. 3 positions are modified to phosphoserine: S441, S500, and S502. Positions 781 to 942 (ALLENMHIEQ…VQDLEVWAFD (162 aa)) constitute a TLDc domain.

The protein belongs to the OXR1 family. As to quaternary structure, interacts with ESR1, ESR2A, ESR2B, THRB, PPARG and RARA in a ligand-inducible manner. Interacts with the heterodimer AHR-ARNT. In terms of tissue distribution, highly expressed in brain. Weakly expressed in mammary gland, ovary, uterus, prostate, stomach, bladder, spinal cord and pancreas. Expressed in cancer cell line.

It is found in the nucleus. Functionally, enhances the transcriptional activities of several nuclear receptors. Involved in the coactivation of different nuclear receptors, such as ESR1, THRB, PPARG and RARA. The protein is Nuclear receptor coactivator 7 (NCOA7) of Homo sapiens (Human).